A 289-amino-acid polypeptide reads, in one-letter code: BTB/POZ domain-containing protein KCTD7 (289 aa).

A disordered region spans residues 1 to 35 (MVVVTGREPDSRRQDGAMSSSDAEDDFLEPATPTA). The BTB domain occupies 51 to 149 (EVVPLNIGGA…QLENMQPLKG (99 aa)).

In terms of assembly, interacts with CUL3.

It is found in the cell membrane. Its subcellular location is the cytoplasm. The protein resides in the cytosol. May be involved in the control of excitability of cortical neurons. The sequence is that of BTB/POZ domain-containing protein KCTD7 (KCTD7) from Homo sapiens (Human).